A 421-amino-acid chain; its full sequence is D-amino acid dehydrogenase (421 aa).

Residue 3-17 participates in FAD binding; the sequence is ILILGSGVVGTASAY.

The protein belongs to the DadA oxidoreductase family. FAD serves as cofactor.

It catalyses the reaction a D-alpha-amino acid + A + H2O = a 2-oxocarboxylate + AH2 + NH4(+). The protein operates within amino-acid degradation; D-alanine degradation; NH(3) and pyruvate from D-alanine: step 1/1. In terms of biological role, oxidative deamination of D-amino acids. The sequence is that of D-amino acid dehydrogenase from Xanthobacter autotrophicus (strain ATCC BAA-1158 / Py2).